A 234-amino-acid chain; its full sequence is Phosphoribosylaminoimidazole-succinocarboxamide synthase (234 aa).

The protein belongs to the SAICAR synthetase family.

It catalyses the reaction 5-amino-1-(5-phospho-D-ribosyl)imidazole-4-carboxylate + L-aspartate + ATP = (2S)-2-[5-amino-1-(5-phospho-beta-D-ribosyl)imidazole-4-carboxamido]succinate + ADP + phosphate + 2 H(+). Its pathway is purine metabolism; IMP biosynthesis via de novo pathway; 5-amino-1-(5-phospho-D-ribosyl)imidazole-4-carboxamide from 5-amino-1-(5-phospho-D-ribosyl)imidazole-4-carboxylate: step 1/2. This is Phosphoribosylaminoimidazole-succinocarboxamide synthase from Staphylococcus aureus (strain COL).